The chain runs to 401 residues: Subtilisin-like protease 7 (401 aa).

Positions 1-20 (MGFITKAIPLALAAASVING) are cleaved as a signal peptide. A propeptide spanning residues 21–119 (AEILETRAGV…IERDARVQIN (99 aa)) is cleaved from the precursor. An Inhibitor I9 domain is found at 36-118 (KYIVVMNDGM…YIERDARVQI (83 aa)). Residue Asn58 is glycosylated (N-linked (GlcNAc...) asparagine). The 273-residue stretch at 129-401 (SWGLARVGSR…SKLINNGSGM (273 aa)) folds into the Peptidase S8 domain. Active-site charge relay system residues include Asp161 and His193. N-linked (GlcNAc...) asparagine glycans are attached at residues Asn223 and Asn253. Ser347 functions as the Charge relay system in the catalytic mechanism. N-linked (GlcNAc...) asparagine glycosylation is present at Asn397.

Belongs to the peptidase S8 family.

The protein resides in the secreted. Its function is as follows. Secreted subtilisin-like serine protease with keratinolytic activity that contributes to pathogenicity. The protein is Subtilisin-like protease 7 (SUB7) of Trichophyton equinum (Horse ringworm fungus).